The primary structure comprises 98 residues: Cell division protein FtsB (98 aa).

At 1-3 (MKR) the chain is on the cytoplasmic side. Residues 4–21 (LLFVLIALLAMLQYRLWL) form a helical membrane-spanning segment. The Periplasmic portion of the chain corresponds to 22–98 (GDKSLADSFH…GGERGGVPEN (77 aa)). Positions 31–74 (HLQEQIKLQQQSNAQLVARNQVLREEISDLRSGTEALEERARNE) form a coiled coil.

This sequence belongs to the FtsB family. Part of a complex composed of FtsB, FtsL and FtsQ.

It localises to the cell inner membrane. Its function is as follows. Essential cell division protein. May link together the upstream cell division proteins, which are predominantly cytoplasmic, with the downstream cell division proteins, which are predominantly periplasmic. The sequence is that of Cell division protein FtsB from Shewanella pealeana (strain ATCC 700345 / ANG-SQ1).